A 130-amino-acid chain; its full sequence is Universal stress protein MSMEG_4207 (130 aa).

Lysine 104 carries the N6-acetyllysine modification.

The protein belongs to the universal stress protein A family. Post-translationally, acetylated on Lys-104 by PatA in the presence of acetyl-CoA as an acetyl donor.

This Mycolicibacterium smegmatis (strain ATCC 700084 / mc(2)155) (Mycobacterium smegmatis) protein is Universal stress protein MSMEG_4207.